The chain runs to 103 residues: Large ribosomal subunit protein bL21 (103 aa).

The protein belongs to the bacterial ribosomal protein bL21 family. As to quaternary structure, part of the 50S ribosomal subunit. Contacts protein L20.

Functionally, this protein binds to 23S rRNA in the presence of protein L20. The protein is Large ribosomal subunit protein bL21 of Glaesserella parasuis serovar 5 (strain SH0165) (Haemophilus parasuis).